An 81-amino-acid chain; its full sequence is ATP synthase subunit c (81 aa).

Helical transmembrane passes span 7 to 27 (AASVLAAALAVGLAAIGPGIG) and 57 to 77 (LAFMEALTIYGLVVALVLLFA).

It belongs to the ATPase C chain family. F-type ATPases have 2 components, F(1) - the catalytic core - and F(0) - the membrane proton channel. F(1) has five subunits: alpha(3), beta(3), gamma(1), delta(1), epsilon(1). F(0) has four main subunits: a(1), b(1), b'(1) and c(10-14). The alpha and beta chains form an alternating ring which encloses part of the gamma chain. F(1) is attached to F(0) by a central stalk formed by the gamma and epsilon chains, while a peripheral stalk is formed by the delta, b and b' chains.

The protein localises to the cellular thylakoid membrane. Functionally, f(1)F(0) ATP synthase produces ATP from ADP in the presence of a proton or sodium gradient. F-type ATPases consist of two structural domains, F(1) containing the extramembraneous catalytic core and F(0) containing the membrane proton channel, linked together by a central stalk and a peripheral stalk. During catalysis, ATP synthesis in the catalytic domain of F(1) is coupled via a rotary mechanism of the central stalk subunits to proton translocation. Key component of the F(0) channel; it plays a direct role in translocation across the membrane. A homomeric c-ring of between 10-14 subunits forms the central stalk rotor element with the F(1) delta and epsilon subunits. This Nostoc sp. (strain PCC 7120 / SAG 25.82 / UTEX 2576) protein is ATP synthase subunit c.